The sequence spans 688 residues: NADPH-dependent diflavin oxidoreductase 1 (688 aa).

Residues 26–76 form a disordered region; the sequence is HLHRHADTSPTNQHNTSHKMTTTEPIHVTTGSGESRDHTEPRHVTPTSPNA. Residues 33 to 58 are compositionally biased toward polar residues; that stretch reads TSPTNQHNTSHKMTTTEPIHVTTGSG. Positions 59-68 are enriched in basic and acidic residues; it reads ESRDHTEPRH. Residues 82 to 227 form the Flavodoxin-like domain; sequence ITIAYATETG…MYNEWQARFC (146 aa). FMN is bound by residues 88–93, 136–139, 174–183, and D209; these read TETGNA, STTG, and LGDSSYPRFN. The FAD-binding FR-type domain maps to 277–543; that stretch reads KDVLQGTVVG…KHSTPIPDLD (267 aa). FAD-binding positions include R453, 483 to 486, and 515 to 518; these read RLFS and GVLT. NADP(+) is bound by residues T554, 607–608, and 613–617; these read SR and GGYVQ. Residue W688 coordinates FAD.

This sequence belongs to the NADPH-dependent diflavin oxidoreductase NDOR1 family. In the N-terminal section; belongs to the flavodoxin family. It in the C-terminal section; belongs to the flavoprotein pyridine nucleotide cytochrome reductase family. As to quaternary structure, interacts with DRE2; as part of the cytosolic iron-sulfur (Fe-S) protein assembly (CIA) machinery. It depends on FAD as a cofactor. FMN is required as a cofactor.

The protein localises to the cytoplasm. It localises to the mitochondrion. It catalyses the reaction 2 oxidized [2Fe-2S]-[protein] + NADPH = 2 reduced [2Fe-2S]-[protein] + NADP(+) + H(+). NADPH-dependent reductase which is a central component of the cytosolic iron-sulfur (Fe-S) protein assembly (CIA) machinery. Transfers electrons from NADPH via its FAD and FMN prosthetic groups to the [2Fe-2S] cluster of DRE2, another key component of the CIA machinery. In turn, this reduced cluster provides electrons for assembly of cytosolic iron-sulfur cluster proteins. Positively controls H(2)O(2)-induced cell death. This is NADPH-dependent diflavin oxidoreductase 1 from Yarrowia lipolytica (strain CLIB 122 / E 150) (Yeast).